Consider the following 203-residue polypeptide: Large ribosomal subunit protein uL6 (203 aa).

It belongs to the universal ribosomal protein uL6 family. Part of the 50S ribosomal subunit.

In terms of biological role, this protein binds to the 23S rRNA, and is important in its secondary structure. It is located near the subunit interface in the base of the L7/L12 stalk, and near the tRNA binding site of the peptidyltransferase center. In Hyphomonas neptunium (strain ATCC 15444), this protein is Large ribosomal subunit protein uL6.